Here is a 127-residue protein sequence, read N- to C-terminus: Dual endothelin-1/VEGF signal peptide receptor (127 aa).

Over 1 to 65 the chain is Extracellular; sequence MNALYVTTVP…EMKSRWNWGS (65 aa). A helical transmembrane segment spans residues 66–84; that stretch reads ITCIICFTCVGSQLSMSSS. Residues 85–127 are Cytoplasmic-facing; sequence KASNFSGPLQLYQRGIGHITNSYKRPQAPAWPCLSSGTMGRSH.

In terms of tissue distribution, widely expressed with higher levels in kidney and aorta.

The protein resides in the cell membrane. Functionally, dual receptor for both endothelin-1 and the signal sequence of vascular endothelial growth factor A. Does not act as a receptor for angiotensin-2. Does not bind the VEGFA mature protein. May play a role in angiogenesis with a significant role in cardiovascular and neural development. This chain is Dual endothelin-1/VEGF signal peptide receptor, found in Mus musculus (Mouse).